We begin with the raw amino-acid sequence, 324 residues long: Biotin synthase (324 aa).

In terms of domain architecture, Radical SAM core spans 50-278 (HAGPAFTCAI…QADILVAGGR (229 aa)). [4Fe-4S] cluster contacts are provided by Cys-67, Cys-71, and Cys-74. Cys-143 and Cys-203 together coordinate [2Fe-2S] cluster.

This sequence belongs to the radical SAM superfamily. Biotin synthase family. Homodimer. [4Fe-4S] cluster is required as a cofactor. [2Fe-2S] cluster serves as cofactor.

It catalyses the reaction (4R,5S)-dethiobiotin + (sulfur carrier)-SH + 2 reduced [2Fe-2S]-[ferredoxin] + 2 S-adenosyl-L-methionine = (sulfur carrier)-H + biotin + 2 5'-deoxyadenosine + 2 L-methionine + 2 oxidized [2Fe-2S]-[ferredoxin]. It functions in the pathway cofactor biosynthesis; biotin biosynthesis; biotin from 7,8-diaminononanoate: step 2/2. In terms of biological role, catalyzes the conversion of dethiobiotin (DTB) to biotin by the insertion of a sulfur atom into dethiobiotin via a radical-based mechanism. The polypeptide is Biotin synthase (Oleidesulfovibrio alaskensis (strain ATCC BAA-1058 / DSM 17464 / G20) (Desulfovibrio alaskensis)).